The primary structure comprises 477 residues: Proton-coupled amino acid transporter 3 (477 aa).

The Cytoplasmic segment spans residues 1–54 (MGNVPLLREVGKCQRNMFGRSTASSKGSSNSRSSSSTSPKKGPRREADALMFIQ). A compositionally biased stretch (low complexity) spans 19–40 (GRSTASSKGSSNSRSSSSTSPK). The segment at 19 to 43 (GRSTASSKGSSNSRSSSSTSPKKGP) is disordered. A helical transmembrane segment spans residues 55-75 (IFIHLLKSNIGTGFLGLPLAV). Over 76–77 (KN) the chain is Extracellular. A helical transmembrane segment spans residues 78-98 (AGLLVGPVSLLAIGALTVHCM). At 99-144 (DILLNCACHLTQRLQRSFVNYEETTMYSLETCPSPWLRTHSVWGRY) the chain is on the cytoplasmic side. A helical membrane pass occupies residues 145-165 (VVSFLLIVTQLGFCSVYFMFL). The Extracellular segment spans residues 166 to 202 (ADNLQQIMEEAHFTSNVCQPRQSLVMTSILDTRFYML). A helical transmembrane segment spans residues 203-223 (TILPFLILLVLIQNPQVLSIF). The Cytoplasmic segment spans residues 224 to 225 (ST). A helical transmembrane segment spans residues 226 to 246 (LATITTLSSLALIFEYLIQTP). The Extracellular portion of the chain corresponds to 247-259 (HHSNLPLVANWKT). A helical transmembrane segment spans residues 260–280 (FLLFFGTAIFTFEGVGMVLPL). At 281–291 (KSQMKSPQQFP) the chain is on the cytoplasmic side. A helical membrane pass occupies residues 292–312 (AVLYLGMSFVIFLYICLGTLG). Residues 313–344 (YMKFGTDTQASITLNLPICWLYQSVKLMYSVG) lie on the Extracellular side of the membrane. Residues 345–365 (IFFTYALQFHVPAEIIVPYVV) form a helical membrane-spanning segment. Residues 366–374 (SRVSENWAL) are Cytoplasmic-facing. Residues 375 to 395 (FVDLTVRTALVCLTCFSAVLI) form a helical membrane-spanning segment. At 396–399 (PRLD) the chain is on the extracellular side. A helical transmembrane segment spans residues 400-420 (LVISLVGSVSSSALAIIIPPL). Topologically, residues 421–432 (LEIATFYSENIS) are cytoplasmic. A helical membrane pass occupies residues 433–453 (CATIVKDIMISILGLLGCVLG). The Extracellular segment spans residues 454-477 (TYQALYEMTQQTHFYMANSTRVHI).

This sequence belongs to the amino acid/polyamine transporter 2 family. As to expression, specifically expressed in testis.

Its subcellular location is the membrane. The polypeptide is Proton-coupled amino acid transporter 3 (Slc36a3) (Mus musculus (Mouse)).